Here is a 1149-residue protein sequence, read N- to C-terminus: DNA polymerase (1149 aa).

Polar residues predominate over residues Met1–Pro28. The segment at Met1–Pro49 is disordered. Over residues Pro31–Pro49 the composition is skewed to low complexity.

The protein belongs to the DNA polymerase type-B family. As to quaternary structure, heterodimer with the terminal protein; this heterodimer binds to bp 9 to 18 of the genome. Forms a complex with viral pTP, DBP and hosts NFIA and POU2F1/OCT1 for initiation of replication.

It localises to the host nucleus. The catalysed reaction is DNA(n) + a 2'-deoxyribonucleoside 5'-triphosphate = DNA(n+1) + diphosphate. Its function is as follows. Eukaryotic-type DNA polymerase involved in viral genomic replication. DNA synthesis is protein primed, and acts in a strand displacement replication. Assembles in complex with viral pTP, DBP, host NFIA and host POU2F1/OCT1 on viral origin of replication. The polymerase covalently transfers dCMP onto pTP, thereby initiating complementary strand synthesis. The chain is DNA polymerase from Canine adenovirus serotype 1 (strain CLL) (CAdV-1).